The following is a 260-amino-acid chain: CD320 antigen (260 aa).

The first 28 residues, 1–28, serve as a signal peptide directing secretion; that stretch reads MARGGAGRAVALGLVLRLLFGLRTGLEA. Over 29–208 the chain is Extracellular; that stretch reads APAPAHTRVQ…DSSRNPSAYG (180 aa). The LDL-receptor class A 1 domain maps to 46–83; that stretch reads SCPTDTFQCLTSGYCVPLSWRCDGDQDCSDGSDEEDCR. Disulfide bonds link C47–C60, C54–C73, and C67–C82. Ca(2+) contacts are provided by W65, D68, D70, D72, D78, and E79. N118 carries an N-linked (GlcNAc...) asparagine glycan. Residues 123–160 enclose the LDL-receptor class A 2 domain; the sequence is PCQESELHCILDDVCIPHTWRCDGHPDCLDSSDELSCD. 3 disulfides stabilise this stretch: C124-C137, C131-C150, and C144-C159. The Ca(2+) site is built by W142, D145, H147, D149, D155, and E156. N185 carries N-linked (GlcNAc...) asparagine glycosylation. The chain crosses the membrane as a helical span at residues 209-229; it reads VIAAAGVLSAILVSATLLILL. The Cytoplasmic portion of the chain corresponds to 230–260; sequence RLRGQGYLPPPGLLVAVKESLLLSERKTSLI.

As to quaternary structure, interacts (via LDL-receptor class A domains) with TCN2.

The protein resides in the cell membrane. Functionally, receptor for transcobalamin saturated with cobalamin (TCbl). Plays an important role in cobalamin uptake. Plasma membrane protein that is expressed on follicular dendritic cells (FDC) and mediates interaction with germinal center B cells. Functions as a costimulator to promote B cell responses to antigenic stimuli; promotes B cell differentiation and proliferation. Germinal center-B (GC-B) cells differentiate into memory B-cells and plasma cells (PC) through interaction with T-cells and follicular dendritic cells (FDC). CD320 augments the proliferation of PC precursors generated by IL-10. The protein is CD320 antigen (Cd320) of Mus musculus (Mouse).